The following is a 430-amino-acid chain: Signal recognition particle protein (430 aa).

Residues glycine 105–threonine 112, aspartate 187–arginine 191, and threonine 245–aspartate 248 each bind GTP.

Belongs to the GTP-binding SRP family. SRP54 subfamily. As to quaternary structure, part of the signal recognition particle protein translocation system, which is composed of SRP and FtsY.

The protein localises to the cytoplasm. The catalysed reaction is GTP + H2O = GDP + phosphate + H(+). Involved in targeting and insertion of nascent membrane proteins into the cytoplasmic membrane. Binds to the hydrophobic signal sequence of the ribosome-nascent chain (RNC) as it emerges from the ribosomes. The SRP-RNC complex is then targeted to the cytoplasmic membrane where it interacts with the SRP receptor FtsY. This Thermus aquaticus protein is Signal recognition particle protein.